The following is a 2298-amino-acid chain: Protein Ycf2 (2298 aa).

Residue 1652–1659 (GSIGTGRS) coordinates ATP.

Belongs to the Ycf2 family.

It localises to the plastid. Its subcellular location is the chloroplast stroma. Probable ATPase of unknown function. Its presence in a non-photosynthetic plant (Epifagus virginiana) and experiments in tobacco indicate that it has an essential function which is probably not related to photosynthesis. This Aethionema cordifolium (Lebanon stonecress) protein is Protein Ycf2.